The sequence spans 269 residues: Formamidopyrimidine-DNA glycosylase (269 aa).

Residue Pro-2 is the Schiff-base intermediate with DNA of the active site. The active-site Proton donor is the Glu-3. Lys-57 acts as the Proton donor; for beta-elimination activity in catalysis. DNA contacts are provided by His-90, Arg-109, and Lys-150. The FPG-type zinc-finger motif lies at 235-269; it reads QVYGRAGELCRRCGNVIEIAKHGQRSTFFCRHCQH. Arg-259 acts as the Proton donor; for delta-elimination activity in catalysis.

The protein belongs to the FPG family. In terms of assembly, monomer. Zn(2+) is required as a cofactor.

It catalyses the reaction Hydrolysis of DNA containing ring-opened 7-methylguanine residues, releasing 2,6-diamino-4-hydroxy-5-(N-methyl)formamidopyrimidine.. It carries out the reaction 2'-deoxyribonucleotide-(2'-deoxyribose 5'-phosphate)-2'-deoxyribonucleotide-DNA = a 3'-end 2'-deoxyribonucleotide-(2,3-dehydro-2,3-deoxyribose 5'-phosphate)-DNA + a 5'-end 5'-phospho-2'-deoxyribonucleoside-DNA + H(+). Its function is as follows. Involved in base excision repair of DNA damaged by oxidation or by mutagenic agents. Acts as a DNA glycosylase that recognizes and removes damaged bases. Has a preference for oxidized purines, such as 7,8-dihydro-8-oxoguanine (8-oxoG). Has AP (apurinic/apyrimidinic) lyase activity and introduces nicks in the DNA strand. Cleaves the DNA backbone by beta-delta elimination to generate a single-strand break at the site of the removed base with both 3'- and 5'-phosphates. The polypeptide is Formamidopyrimidine-DNA glycosylase (Yersinia enterocolitica serotype O:8 / biotype 1B (strain NCTC 13174 / 8081)).